The chain runs to 319 residues: Pantothenate kinase (319 aa).

101–108 lines the ATP pocket; that stretch reads GSVAVGKS.

The protein belongs to the prokaryotic pantothenate kinase family.

The protein localises to the cytoplasm. It catalyses the reaction (R)-pantothenate + ATP = (R)-4'-phosphopantothenate + ADP + H(+). Its pathway is cofactor biosynthesis; coenzyme A biosynthesis; CoA from (R)-pantothenate: step 1/5. This is Pantothenate kinase from Clavibacter michiganensis subsp. michiganensis (strain NCPPB 382).